Here is a 1300-residue protein sequence, read N- to C-terminus: Phospholipid-transporting ATPase IK (1300 aa).

Polar residues predominate over residues 1–11; the sequence is MGTGPAQTPRS. Residues 1-98 form a disordered region; that stretch reads MGTGPAQTPR…SLGQREDLQD (98 aa). Residues 1–149 are Cytoplasmic-facing; the sequence is MGTGPAQTPR…TAKYNFYSFL (149 aa). A compositionally biased stretch (basic residues) spans 65–74; that stretch reads RRHKAQPGRA. The chain crosses the membrane as a helical span at residues 150-171; that stretch reads PLNLYEQFHRVSNLFFLIIIIL. Residues 172 to 177 are Exoplasmic loop-facing; that stretch reads QSIPDI. Residues 178 to 197 traverse the membrane as a helical segment; that stretch reads STLPWFSLSTPMVCLLFIRA. The Cytoplasmic portion of the chain corresponds to 198–381; it reads TRDLVDDMGR…TKLDLLMNKL (184 aa). Residues 382–403 form a helical membrane-spanning segment; sequence VVVIFISVVLVCLVLAFGFGFS. The Exoplasmic loop portion of the chain corresponds to 404–430; sequence VKEFKDHHYYLSGVHGSSVAAESFFVF. Residues 431 to 452 traverse the membrane as a helical segment; the sequence is WSFLILLSVTIPMSMFILSEFI. Residues 453 to 995 are Cytoplasmic-facing; sequence YLGNSVFIDW…GRWSYVRICK (543 aa). Asp-495 (4-aspartylphosphate intermediate) is an active-site residue. Residues Asp-495, Lys-496, Thr-497, Glu-596, Phe-637, Lys-660, Arg-693, Thr-763, Gly-764, Asp-765, Arg-913, and Lys-919 each contribute to the ATP site. Asp-495 is a binding site for Mg(2+). Mg(2+) is bound at residue Thr-497. Asp-939 is a Mg(2+) binding site. Residues Asn-942 and Asp-943 each coordinate ATP. A Mg(2+)-binding site is contributed by Asp-943. The chain crosses the membrane as a helical span at residues 996 to 1016; sequence FLRYFFYKSMASMMVQVWFAC. Topologically, residues 1017-1028 are exoplasmic loop; it reads YNGFTGQPLYEG. Residues 1029 to 1048 form a helical membrane-spanning segment; sequence WFLALFNLLYSTLPVLYIGL. Residues 1049 to 1078 lie on the Cytoplasmic side of the membrane; sequence FEQDVSAEQSLEKPELYVVGQKDELFNYWV. A helical transmembrane segment spans residues 1079–1100; the sequence is FVQAIAHGVTTSLVNFFMTLWI. Residues 1101–1112 are Exoplasmic loop-facing; the sequence is SRDTAGPASFSD. A helical transmembrane segment spans residues 1113-1135; the sequence is HQSFAVVVALSCLLSITMEVILI. Over 1136–1141 the chain is Cytoplasmic; that stretch reads IKYWTA. Residues 1142–1162 form a helical membrane-spanning segment; that stretch reads LCVATILLSLGFYAIMTTTTQ. Residues 1163–1182 are Exoplasmic loop-facing; it reads SFWLFRVSPTTFPFLYADLS. Residues 1183 to 1207 form a helical membrane-spanning segment; it reads VMSSPSILLVVLLSVSINTFPVLAL. The Cytoplasmic portion of the chain corresponds to 1208–1300; that stretch reads RVIFPALKEL…EAASSPKESQ (93 aa). Residues 1272–1300 form a disordered region; the sequence is RGPGVSSDIASESLDPSDEEAASSPKESQ.

This sequence belongs to the cation transport ATPase (P-type) (TC 3.A.3) family. Type IV subfamily. Requires Mg(2+) as cofactor. In terms of tissue distribution, isoform 3 was only detected in testis.

The protein localises to the cytoplasmic vesicle. It is found in the secretory vesicle. It localises to the acrosome membrane. The protein resides in the endoplasmic reticulum membrane. The enzyme catalyses ATP + H2O + phospholipidSide 1 = ADP + phosphate + phospholipidSide 2.. It catalyses the reaction a 1,2-diacyl-sn-glycero-3-phospho-L-serine(out) + ATP + H2O = a 1,2-diacyl-sn-glycero-3-phospho-L-serine(in) + ADP + phosphate + H(+). Functionally, P4-ATPase flippase which catalyzes the hydrolysis of ATP coupled to the transport of aminophospholipids from the outer to the inner leaflet of various membranes and ensures the maintenance of asymmetric distribution of phospholipids. Phospholipid translocation also seems to be implicated in vesicle formation and in uptake of lipid signaling molecules. May be responsible for the maintenance of asymmetric distribution of phosphatidylserine (PS) in spermatozoa membranes. Involved in acrosome reactions and binding of spermatozoa to zona pellucida. In Homo sapiens (Human), this protein is Phospholipid-transporting ATPase IK.